The following is a 1101-amino-acid chain: MEEENAVEILQRYRRDRRKLLDFMLAGSLIKKVIMPPGAVTLDDVDLDQVSVDYVINCAKKGGMLELAEAIRDYHDHIGLPYMNSVGTADEFFLATIPESSGSPPKRAPPPIPVLISSSSPMVTNPEWCESPSAPPLMRSESFDSPKAQELTVDDIDDFEDDDDLDEVGNFRISRRTANDAADLVPRLPSFATGITDDDLRETAFEILLACAGASGGLIVPSKEKKKEKSRSRLIKKLGRKSESVSQSQSSSGLVSLLEMMRGQMEISEAMDIRTRQGLLNALAGKVGKRMDSLLVPLELLCCVSRTEFSDKKAYLRWQKRQLNMLAEGLINNPVVGFGESGRKATDLKSLLLRIEESESLPSSAGEVQRAECLKSLREVAISLAERPARGDLTGEVCHWADGYHLNVRLYEKLLLCVFDILNDGKLTEEVEEILELLKSTWRVLGITETIHYTCYAWVLFRQYVITSERGLLRHAIQQLKKIPLKEQRGPQERLHLKTLKCRVDNEEISFLESFLSPIRSWADKQLGDYHLHFAEGSLVMEDTVTVAMITWRLLLEESDRAMHSNSSDREQIESYVLSSIKNTFTRMSLAIDRSDRNNEHHLALLAEETKKLMKKDSTIFMPILSQRHPQAIAFSASLIHKLYGNKLKPFLDGAEHLTEDAVSVFPAADSLEQYLLELMTSVCGEDTSGPYFKKLIPYEVESLSGTLVLRWINSQLGRILSWVERAYKQEHWDPISPQQRYGSSIVEVFRIVEETVDQFFALKVPMRSIELSALFRGIDNAFQVYTNHVMEKLASKDDLVPPVPVLTRYKKETAIKVFVKKELFDSKHLDERRSINIDVPATAMLCVQLNTLHYAVSQLSKLEDSMWLRWIAKKPREKIVIRKSMVEKSKSFNQKESFEGSRKDINAALDRICEFTGTKIIFCDLREPFIENLYKPNVSQSRLEGLIEALDTELGQLCSVIMEPLRDRIVTSLLQASLDGLLRVLLDGGASRVFHPSESKLLEEDVEVLKEFFISGGDGLPRGVVENQVARVRLVVKLHGYETRELIDDLRSRSSLEMQQGGKGKLGADTQTLVRVLCHRNDSEASQFLKKQYKIPRSHG.

The region spanning Val-663 to Val-804 is the MHD1 domain. Positions Gln-941–Leu-1051 constitute an MHD2 domain.

The protein belongs to the unc-13 family. In terms of tissue distribution, expressed in roots, cotyledons, leaves, stems and flowers. Expressed in guard cells and mesophyll cells of leaves.

The protein localises to the cytoplasm. It localises to the cell membrane. Controls the tethering of the proton ATPase AHA1 to the plasma membrane. Is essential for stomatal opening in response to low concentration of carbon dioxide and light. The protein is Protein unc-13 homolog of Arabidopsis thaliana (Mouse-ear cress).